Consider the following 466-residue polypeptide: SVGFKAGVKDYKLTYYTPEYETLDTDILAAFRVSPQPGVPPEEAGAAVAAESSTGTWTTVWTDGLTSLDRYKGRCYHIEPVAGEENQYICYVAYPLDLFEEGSVTNMFTSIVGNVFGFKALRALRLEDLRIPVAYVKTFLGPPHGIQVERDKLNKYGRPLLGCTIKPKLGLSAKNYGRAVYECLRGGLDFTKDDENVNSQPFMRWRDRFLFCAEAIYKSQAETGEIKGHYLNATAGTCEEMIKRAVFARELGVPIVMHDYLTGGFTANTSLAHYCRDNGLLLHIHRAMHAVIDRQKNHGMHFRVLAKALRLSGGDHIHAGTVVGKLEGEREITLGFVDLLRDDFTEKDRSRGIYFTQSWVSTPGVLPVASGGIHVWHMPALTEIFGDDSVLQFGGGTLGHPWGNAPGAVANRVALEACVQARNEGRDLAREGNTIIREACKWSPELAAACEVWKEIKFEFQAMDTI.

The residue at position 5 (lysine 5) is an N6,N6,N6-trimethyllysine. Substrate contacts are provided by asparagine 114 and threonine 164. Catalysis depends on lysine 166, which acts as the Proton acceptor. Lysine 168 is a substrate binding site. Mg(2+) contacts are provided by lysine 192, aspartate 194, and glutamate 195. Lysine 192 is subject to N6-carboxylysine. The Proton acceptor role is filled by histidine 285. Positions 286, 318, and 370 each coordinate substrate.

It belongs to the RuBisCO large chain family. Type I subfamily. In terms of assembly, heterohexadecamer of 8 large chains and 8 small chains; disulfide-linked. The disulfide link is formed within the large subunit homodimers. Mg(2+) serves as cofactor. Post-translationally, the disulfide bond which can form in the large chain dimeric partners within the hexadecamer appears to be associated with oxidative stress and protein turnover.

The protein localises to the plastid. It localises to the chloroplast. It carries out the reaction 2 (2R)-3-phosphoglycerate + 2 H(+) = D-ribulose 1,5-bisphosphate + CO2 + H2O. It catalyses the reaction D-ribulose 1,5-bisphosphate + O2 = 2-phosphoglycolate + (2R)-3-phosphoglycerate + 2 H(+). RuBisCO catalyzes two reactions: the carboxylation of D-ribulose 1,5-bisphosphate, the primary event in carbon dioxide fixation, as well as the oxidative fragmentation of the pentose substrate in the photorespiration process. Both reactions occur simultaneously and in competition at the same active site. This chain is Ribulose bisphosphate carboxylase large chain, found in Silene gallica (Common catchfly).